The following is a 340-amino-acid chain: Formimidoylglutamase (340 aa).

The Mn(2+) site is built by His-129, Asp-160, His-162, Asp-164, Asp-257, and Asp-259.

The protein belongs to the arginase family. Requires Mn(2+) as cofactor.

It catalyses the reaction N-formimidoyl-L-glutamate + H2O = formamide + L-glutamate. The protein operates within amino-acid degradation; L-histidine degradation into L-glutamate; L-glutamate from N-formimidoyl-L-glutamate (hydrolase route): step 1/1. Catalyzes the conversion of N-formimidoyl-L-glutamate to L-glutamate and formamide. In Vibrio parahaemolyticus serotype O3:K6 (strain RIMD 2210633), this protein is Formimidoylglutamase.